The primary structure comprises 164 residues: CASP-like protein 1C2 (164 aa).

Residues 1-8 (MVKLTQRL) lie on the Cytoplasmic side of the membrane. A helical transmembrane segment spans residues 9 to 29 (GGLVLRFAAFCAALGAVIAMI). The Extracellular segment spans residues 30-51 (TSRERSSFFVISLVAKYSDLAA). The helical transmembrane segment at 52-72 (FKYFVIANAIVTVYSFLVLFL) threads the bilayer. Residues 73–80 (PKESLLWK) are Cytoplasmic-facing. Residues 81–101 (FVVVLDLMVTMLLTSSLSAAV) form a helical membrane-spanning segment. Residues 102–129 (AVAQVGKRGNANAGWLPICGQVPRFCDQ) are Extracellular-facing. A helical transmembrane segment spans residues 130–150 (ITGALIAGLVALVLYVFLLIF). The Cytoplasmic portion of the chain corresponds to 151–164 (SIHHVVDPFLLRKS).

The protein belongs to the Casparian strip membrane proteins (CASP) family. Homodimer and heterodimers.

Its subcellular location is the cell membrane. The polypeptide is CASP-like protein 1C2 (Arabidopsis thaliana (Mouse-ear cress)).